Consider the following 273-residue polypeptide: Putative pyruvate, phosphate dikinase regulatory protein (273 aa).

ADP is bound at residue Gly-153–Thr-160.

The protein belongs to the pyruvate, phosphate/water dikinase regulatory protein family. PDRP subfamily.

The enzyme catalyses N(tele)-phospho-L-histidyl/L-threonyl-[pyruvate, phosphate dikinase] + ADP = N(tele)-phospho-L-histidyl/O-phospho-L-threonyl-[pyruvate, phosphate dikinase] + AMP + H(+). It catalyses the reaction N(tele)-phospho-L-histidyl/O-phospho-L-threonyl-[pyruvate, phosphate dikinase] + phosphate + H(+) = N(tele)-phospho-L-histidyl/L-threonyl-[pyruvate, phosphate dikinase] + diphosphate. Bifunctional serine/threonine kinase and phosphorylase involved in the regulation of the pyruvate, phosphate dikinase (PPDK) by catalyzing its phosphorylation/dephosphorylation. The chain is Putative pyruvate, phosphate dikinase regulatory protein from Rhizobium leguminosarum bv. trifolii (strain WSM2304).